Here is a 580-residue protein sequence, read N- to C-terminus: Proline--tRNA ligase (580 aa).

It belongs to the class-II aminoacyl-tRNA synthetase family. ProS type 1 subfamily. Homodimer.

It is found in the cytoplasm. The catalysed reaction is tRNA(Pro) + L-proline + ATP = L-prolyl-tRNA(Pro) + AMP + diphosphate. Catalyzes the attachment of proline to tRNA(Pro) in a two-step reaction: proline is first activated by ATP to form Pro-AMP and then transferred to the acceptor end of tRNA(Pro). As ProRS can inadvertently accommodate and process non-cognate amino acids such as alanine and cysteine, to avoid such errors it has two additional distinct editing activities against alanine. One activity is designated as 'pretransfer' editing and involves the tRNA(Pro)-independent hydrolysis of activated Ala-AMP. The other activity is designated 'posttransfer' editing and involves deacylation of mischarged Ala-tRNA(Pro). The misacylated Cys-tRNA(Pro) is not edited by ProRS. In Albidiferax ferrireducens (strain ATCC BAA-621 / DSM 15236 / T118) (Rhodoferax ferrireducens), this protein is Proline--tRNA ligase.